Reading from the N-terminus, the 216-residue chain is Ras-like protein rasW (216 aa).

16-23 is a GTP binding site; it reads GDGGVGKT. An Effector region motif is present at residues 38 to 46; it reads YDPTIEDSY. Residues 63 to 67 and 122 to 125 contribute to the GTP site; these read DTAGQ and NKID. Positions 171–193 are disordered; it reads KRKEDPQSHKPSKDSDSKKPLVN. Basic and acidic residues predominate over residues 172-189; sequence RKEDPQSHKPSKDSDSKK. Cysteine methyl ester is present on Cys213. A lipid anchor (S-geranylgeranyl cysteine) is attached at Cys213. The propeptide at 214 to 216 is removed in mature form; the sequence is KMM.

Belongs to the small GTPase superfamily. Ras family.

The protein localises to the cell membrane. The enzyme catalyses GTP + H2O = GDP + phosphate + H(+). Ras proteins bind GDP/GTP and possess intrinsic GTPase activity. This chain is Ras-like protein rasW (rasW), found in Dictyostelium discoideum (Social amoeba).